We begin with the raw amino-acid sequence, 313 residues long: Methionyl-tRNA formyltransferase (313 aa).

109–112 (SLLP) is a (6S)-5,6,7,8-tetrahydrofolate binding site.

It belongs to the Fmt family.

It catalyses the reaction L-methionyl-tRNA(fMet) + (6R)-10-formyltetrahydrofolate = N-formyl-L-methionyl-tRNA(fMet) + (6S)-5,6,7,8-tetrahydrofolate + H(+). Its function is as follows. Attaches a formyl group to the free amino group of methionyl-tRNA(fMet). The formyl group appears to play a dual role in the initiator identity of N-formylmethionyl-tRNA by promoting its recognition by IF2 and preventing the misappropriation of this tRNA by the elongation apparatus. The chain is Methionyl-tRNA formyltransferase from Pelotomaculum thermopropionicum (strain DSM 13744 / JCM 10971 / SI).